The chain runs to 942 residues: NBPF family member NBPF8 (942 aa).

Residues 89–130 (AEELRQYKVLVHSQERELTQLKEKLQEGRDASRSLNEHLQAL) adopt a coiled-coil conformation. The interval 161-203 (KLSPENDEDEDEDVQVEEDEKVQKSSAPREVQKAEESKVPEDS) is disordered. Residues 165–180 (ENDEDEDEDVQVEEDE) show a composition bias toward acidic residues. The Olduvai 1 domain occupies 165–259 (ENDEDEDEDV…ECQDALNILS (95 aa)). Over residues 190-201 (EVQKAEESKVPE) the composition is skewed to basic and acidic residues. Residues 339–401 (KSMLRNERQF…LSLNEHLQAL (63 aa)) adopt a coiled-coil conformation. Olduvai domains are found at residues 436-528 (ENDN…HIIP), 529-617 (ENES…ATGP), 620-675 (SREL…VDMD), 676-767 (EIEK…PPCP), 770-843 (SREL…RSKK), and 844-904 (KRRR…RSVF). Disordered stretches follow at residues 451-474 (EKVQKSSAPREMQKAEEKEVPEDS) and 528-566 (PENESDDEEEEEKGPVSPRNLQESEEEEVPQESWDEGYS). Acidic residues-rich tracts occupy residues 530–539 (NESDDEEEEE) and 550–562 (ESEEEEVPQESWD). The span at 831–849 (GKGKIRRGRRSKKKRRRGR) shows a compositional bias: basic residues. Residues 831–863 (GKGKIRRGRRSKKKRRRGRKEGEEDQNPPCPRL) form a disordered region.

It belongs to the NBPF family. As to expression, expressed in the mammary gland.

It is found in the cytoplasm. The sequence is that of NBPF family member NBPF8 from Homo sapiens (Human).